Consider the following 554-residue polypeptide: HMG box-containing protein 4 (554 aa).

Disordered stretches follow at residues 15-368 and 417-469; these read GTED…AYQV and HKQN…PAKV. A compositionally biased stretch (basic and acidic residues) spans 75-88; the sequence is SSDDYHADHSTDSA. Over residues 95 to 105 the composition is skewed to low complexity; the sequence is SLPSPSSSDTA. The segment covering 113–123 has biased composition (polar residues); that stretch reads TSPQADTSTTH. Basic and acidic residues-rich tracts occupy residues 145–154 and 217–226; these read PHKDYHKKSG and LGREEIESRS. The span at 236 to 251 shows a compositional bias: polar residues; sequence YTPRSGGTPDSASSTG. Residues 268-296 show a composition bias toward basic residues; that stretch reads MKKKKKSKKSKKKKDKHKDEKHKKHSKSK. The span at 313-332 shows a compositional bias: pro residues; it reads LPSPPPPPATTPPTSPPSIP. Basic and acidic residues predominate over residues 341-357; that stretch reads HTEEQSDKKKKKEDPEK. A DNA-binding region (HMG box) is located at residues 359-427; it reads KKKNMSAYQV…KQNKAEATTV (69 aa). 2 stretches are compositionally biased toward low complexity: residues 433–445 and 454–467; these read SSES…GSSS and SPTS…TSPA.

Interacts with nlk.2.

The protein resides in the nucleus. Its function is as follows. Negatively regulates Wnt/beta-catenin signaling during development. This chain is HMG box-containing protein 4 (hmgxb4), found in Xenopus laevis (African clawed frog).